The primary structure comprises 526 residues: GMP synthase [glutamine-hydrolyzing] (526 aa).

The Glutamine amidotransferase type-1 domain maps to 9-207 (RILILNFGSQ…VLDICSCQGR (199 aa)). Cysteine 86 acts as the Nucleophile in catalysis. Residues histidine 181 and glutamate 183 contribute to the active site. In terms of domain architecture, GMPS ATP-PPase spans 208-401 (WTPNNIKENI…LGLPFHMLYR (194 aa)). 235–241 (SGGVDST) lines the ATP pocket.

Homodimer.

It carries out the reaction XMP + L-glutamine + ATP + H2O = GMP + L-glutamate + AMP + diphosphate + 2 H(+). It functions in the pathway purine metabolism; GMP biosynthesis; GMP from XMP (L-Gln route): step 1/1. In terms of biological role, catalyzes the synthesis of GMP from XMP. The polypeptide is GMP synthase [glutamine-hydrolyzing] (Baumannia cicadellinicola subsp. Homalodisca coagulata).